Consider the following 316-residue polypeptide: 4-hydroxy-3-methylbut-2-enyl diphosphate reductase (316 aa).

[4Fe-4S] cluster is bound at residue cysteine 12. Residues histidine 41 and histidine 74 each contribute to the (2E)-4-hydroxy-3-methylbut-2-enyl diphosphate site. 2 residues coordinate dimethylallyl diphosphate: histidine 41 and histidine 74. Positions 41 and 74 each coordinate isopentenyl diphosphate. Cysteine 96 contacts [4Fe-4S] cluster. Histidine 124 is a binding site for (2E)-4-hydroxy-3-methylbut-2-enyl diphosphate. Dimethylallyl diphosphate is bound at residue histidine 124. Histidine 124 contacts isopentenyl diphosphate. The active-site Proton donor is glutamate 126. (2E)-4-hydroxy-3-methylbut-2-enyl diphosphate is bound at residue threonine 167. A [4Fe-4S] cluster-binding site is contributed by cysteine 197. Positions 225, 226, 227, and 269 each coordinate (2E)-4-hydroxy-3-methylbut-2-enyl diphosphate. Dimethylallyl diphosphate contacts are provided by serine 225, serine 226, asparagine 227, and serine 269. Isopentenyl diphosphate-binding residues include serine 225, serine 226, asparagine 227, and serine 269.

Belongs to the IspH family. Homodimer. [4Fe-4S] cluster is required as a cofactor.

The catalysed reaction is isopentenyl diphosphate + 2 oxidized [2Fe-2S]-[ferredoxin] + H2O = (2E)-4-hydroxy-3-methylbut-2-enyl diphosphate + 2 reduced [2Fe-2S]-[ferredoxin] + 2 H(+). It carries out the reaction dimethylallyl diphosphate + 2 oxidized [2Fe-2S]-[ferredoxin] + H2O = (2E)-4-hydroxy-3-methylbut-2-enyl diphosphate + 2 reduced [2Fe-2S]-[ferredoxin] + 2 H(+). It participates in isoprenoid biosynthesis; dimethylallyl diphosphate biosynthesis; dimethylallyl diphosphate from (2E)-4-hydroxy-3-methylbutenyl diphosphate: step 1/1. It functions in the pathway isoprenoid biosynthesis; isopentenyl diphosphate biosynthesis via DXP pathway; isopentenyl diphosphate from 1-deoxy-D-xylulose 5-phosphate: step 6/6. In terms of biological role, catalyzes the conversion of 1-hydroxy-2-methyl-2-(E)-butenyl 4-diphosphate (HMBPP) into a mixture of isopentenyl diphosphate (IPP) and dimethylallyl diphosphate (DMAPP). Acts in the terminal step of the DOXP/MEP pathway for isoprenoid precursor biosynthesis. The protein is 4-hydroxy-3-methylbut-2-enyl diphosphate reductase of Salmonella paratyphi C (strain RKS4594).